The sequence spans 239 residues: MSEVITQEYTEDGKVLRRIRSFVRREGRLTKGQEAAMKECWPTMGIDYQPELLDWQQVFGNDNPVVLEIGFGMGASLVEMAKNAPEKNFLGIEVHSPGVGACLASAREAGVTNLRVMCHDAVEVFAHMIPDNSLHTLQLFFPDPWHKKRHHKRRIVQLEFAEMVRQKLIIGSGVFHMATDWENYAEHMVEVMNQAPGFANLATDGDYIPRPDERPLTKFEQRGHRLGHGVWDIKYQRTA.

S-adenosyl-L-methionine-binding residues include glutamate 68, glutamate 93, aspartate 120, and aspartate 143. Aspartate 143 is an active-site residue. Substrate is bound by residues lysine 147, aspartate 180, and 217-220 (TKFE).

Belongs to the class I-like SAM-binding methyltransferase superfamily. TrmB family.

The catalysed reaction is guanosine(46) in tRNA + S-adenosyl-L-methionine = N(7)-methylguanosine(46) in tRNA + S-adenosyl-L-homocysteine. The protein operates within tRNA modification; N(7)-methylguanine-tRNA biosynthesis. Its function is as follows. Catalyzes the formation of N(7)-methylguanine at position 46 (m7G46) in tRNA. The protein is tRNA (guanine-N(7)-)-methyltransferase of Vibrio cholerae serotype O1 (strain ATCC 39541 / Classical Ogawa 395 / O395).